The chain runs to 69 residues: DNA-directed RNA polymerase subunit epsilon (69 aa).

Belongs to the RNA polymerase subunit epsilon family. In terms of assembly, RNAP is composed of a core of 2 alpha, a beta and a beta' subunit. The core is associated with a delta subunit, and at least one of epsilon or omega. When a sigma factor is associated with the core the holoenzyme is formed, which can initiate transcription.

The enzyme catalyses RNA(n) + a ribonucleoside 5'-triphosphate = RNA(n+1) + diphosphate. A non-essential component of RNA polymerase (RNAP). This chain is DNA-directed RNA polymerase subunit epsilon, found in Listeria monocytogenes serotype 4b (strain CLIP80459).